The primary structure comprises 252 residues: Neurovirulence factor ICP34.5 (252 aa).

Basic residues predominate over residues 1–15 (MARRRRRHRGPRRPR). Residues 1–17 (MARRRRRHRGPRRPRPP) are required for nucleolar localization. Disordered regions lie at residues 1–129 (MARR…PFRL) and 150–179 (RRAGGEGAPEPPATPATPATPATPATPATP). Polar residues predominate over residues 25–36 (TAQSQVTSTPNS). A compositionally biased stretch (pro residues) spans 46 to 59 (AAPPPPPAGGPPPS). The span at 74–84 (ASDDDDDDDWP) shows a compositional bias: acidic residues. Composition is skewed to pro residues over residues 85–94 (DSPPPEPAPE) and 120–129 (SHPPSRPFRL). Residues 129-138 (LPPRLALRLR) carry the Nuclear export signal motif. Tandem repeats lie at residues 162-164 (ATP), 165-167 (ATP), 168-170 (ATP), 171-173 (ATP), 174-176 (ATP), and 177-179 (ATP). Residues 162 to 179 (ATPATPATPATPATPATP) are 6 X 3 AA tandem repeats of A-T-P. Positions 165–179 (ATPATPATPATPATP) are enriched in low complexity. The interval 179 to 192 (PARVRFSPHVRVRH) is binding to PP1CA. The interaction with host PPP1CA stretch occupies residues 179-192 (PARVRFSPHVRVRH). The interval 194–252 (VVWASAARLARRGSWARERADRARFRRRVAEAEAVIGPCLGPKARARALARGAGPANSV) is important for interferon resistance. Residues 204-222 (RRGSWARERADRARFRRRV) carry the Bipartite nuclear localization signal motif. Positions 222–237 (VAEAEAVIGPCLGPKA) are interaction with host EIF2S1/EIF-2ALPHA.

It belongs to the PPP1R15 family. Interacts with host PPP1CA to form a high-molecular-weight complex that dephosphorylates EIF2S1/eIF-2alpha. Interacts with host EIF2S1/eIF-2alpha; this interaction is crucial for the specific dephosphorylation of EIF2S1/eIF-2alpha by PPP1CA. Binds to proliferating cell nuclear antigen (PCNA), which may release host cells from growth arrest and facilitate viral replication. Interacts (via N-terminus) with host C1QBP and PRKCA. Interacts with protein UL31. Interacts with host TBK1. Interacts with host STING/TMEM173; this interaction inhibits the intracellular DNA sensing pathway. Interacts with host BECN1; this interaction modulates host autophagy.

The protein localises to the host cytoplasm. It is found in the host nucleus. The protein resides in the host nucleolus. It localises to the virion. Its function is as follows. Inhibits the establishment of the immune response and of the integrated stress response (ISR) in the infected cell. Plays essential roles in viral nuclear egress to mediate capsid transit across the nuclear membrane. Facilitates nuclear egress cooperatively with host C1QBP and protein kinase C/PKC to induce lamin A/C phosphorylation and subsequent reorganization. In turn, lamina disassembles and nuclear egress occurs. Recruits the serine/threonine protein phosphatase PPP1CA/PP1-alpha to dephosphorylate the translation initiation factor EIF2S1/eIF-2alpha, thereby couteracting the host shutoff of protein synthesis involving double-stranded RNA-dependent protein kinase EIF2AK2/PKR. In turn, controls host IRF3 activation and subsequently inhibits host interferon response. Controls the DNA sensing pathway by interacting with and inhibiting host STING/TMEM173. Also down-modulates the host MHC class II proteins cell surface expression. Acts as a neurovirulence factor that has a profound effect on the growth of the virus in central nervous system tissue, by interacting with host BECN1 and thereby antagonizing the host autophagy response. In Human herpesvirus 1 (strain CVG-2) (HHV-1), this protein is Neurovirulence factor ICP34.5 (RL1).